The sequence spans 446 residues: Ubiquitin carboxyl-terminal hydrolase MINDY-3 (446 aa).

Cys51 (nucleophile) is an active-site residue. Basic and acidic residues predominate over residues 117-128 (DNSDITDSHPEP). Positions 117-137 (DNSDITDSHPEPESSQPTDTP) are disordered. Residue His288 is the Proton acceptor of the active site.

This sequence belongs to the MINDY deubiquitinase family. FAM188 subfamily.

It localises to the nucleus. It catalyses the reaction Thiol-dependent hydrolysis of ester, thioester, amide, peptide and isopeptide bonds formed by the C-terminal Gly of ubiquitin (a 76-residue protein attached to proteins as an intracellular targeting signal).. Functionally, hydrolase that can remove 'Lys-48'-linked conjugated ubiquitin from proteins. The polypeptide is Ubiquitin carboxyl-terminal hydrolase MINDY-3 (mindy3) (Danio rerio (Zebrafish)).